Consider the following 81-residue polypeptide: Protein L83L (81 aa).

The tract at residues 1-28 (MDTSLKNNDGALDADNKNYQDYKDEPDK) is disordered. The span at 14–28 (ADNKNYQDYKDEPDK) shows a compositional bias: basic and acidic residues.

The protein belongs to the asfivirus L83L family. Interacts with host IL1B.

It localises to the host cytoplasm. Its function is as follows. May subvert the host innate immune response by interacting with host IL1B and interfering with its function. This is Protein L83L from African swine fever virus (isolate Tick/South Africa/Pretoriuskop Pr4/1996) (ASFV).